We begin with the raw amino-acid sequence, 545 residues long: Mesoderm induction early response protein 2 (545 aa).

At Ser11 the chain carries Phosphoserine. The tract at residues 100–189 is disordered; that stretch reads DPISDRESEG…SSDTEEDSLP (90 aa). Positions 140–153 are enriched in polar residues; the sequence is QSSADDLTPSVTSH. The ELM2 domain occupies 195 to 292; the sequence is KEIMVGPQFQ…EALRRLRFNV (98 aa). The region spanning 297-349 is the SANT domain; sequence DGLCAWSEEECRNFEHGFRVHGKNFHLIQANKVRTRSVGECVEYYYLWKKSER. The disordered stretch occupies residues 364-464; the sequence is YVPSGTTDAD…YQPAVTAPEP (101 aa).

Part of a complex containing at least CDYL, MIER1, MIER2, HDAC1 and HDAC2.

It is found in the nucleus. Functionally, transcriptional repressor. The sequence is that of Mesoderm induction early response protein 2 (MIER2) from Homo sapiens (Human).